The following is a 140-amino-acid chain: Ribosome-binding factor A (140 aa).

Residues 1-13 (MQKKSSSKSHRAT) show a composition bias toward basic residues. The interval 1-22 (MQKKSSSKSHRATRGPSQRQLR) is disordered.

The protein belongs to the RbfA family. Monomer. Binds 30S ribosomal subunits, but not 50S ribosomal subunits or 70S ribosomes.

Its subcellular location is the cytoplasm. Its function is as follows. One of several proteins that assist in the late maturation steps of the functional core of the 30S ribosomal subunit. Associates with free 30S ribosomal subunits (but not with 30S subunits that are part of 70S ribosomes or polysomes). Required for efficient processing of 16S rRNA. May interact with the 5'-terminal helix region of 16S rRNA. This chain is Ribosome-binding factor A, found in Parvibaculum lavamentivorans (strain DS-1 / DSM 13023 / NCIMB 13966).